We begin with the raw amino-acid sequence, 292 residues long: Nitrogenase iron protein 2 (292 aa).

12-19 lines the ATP pocket; the sequence is GKGGIGKS. Cys97 lines the [4Fe-4S] cluster pocket. Arg100 bears the ADP-ribosylarginine; by dinitrogenase reductase ADP-ribosyltransferase mark. Residue Cys133 coordinates [4Fe-4S] cluster.

Belongs to the NifH/BchL/ChlL family. Homodimer. It depends on [4Fe-4S] cluster as a cofactor. Post-translationally, the reversible ADP-ribosylation of Arg-100 inactivates the nitrogenase reductase and regulates nitrogenase activity.

It carries out the reaction N2 + 8 reduced [2Fe-2S]-[ferredoxin] + 16 ATP + 16 H2O = H2 + 8 oxidized [2Fe-2S]-[ferredoxin] + 2 NH4(+) + 16 ADP + 16 phosphate + 6 H(+). The key enzymatic reactions in nitrogen fixation are catalyzed by the nitrogenase complex, which has 2 components: the iron protein and the molybdenum-iron protein. This Paenibacillus durus (Paenibacillus azotofixans) protein is Nitrogenase iron protein 2 (nifH2).